Reading from the N-terminus, the 44-residue chain is Diuretic hormone (44 aa).

V44 is subject to Valine amide.

The protein localises to the secreted. In terms of biological role, regulation of fluid secretion. Stimulates primary urine secretion by Malpighian tubules and causes a dose-dependent stimulation of cAMP levels in the tubules. May act as clearance peptide in that it may remove metabolic waste from the hemolymph. This chain is Diuretic hormone, found in Stomoxys calcitrans (Stable fly).